The primary structure comprises 425 residues: Glucan 1,3-beta-glucosidase (425 aa).

The signal sequence occupies residues 1-19; that stretch reads MNLTLLLLALIFSPSLIFS. Glu-219 functions as the Proton donor in the catalytic mechanism. Intrachain disulfides connect Cys-301-Cys-423 and Cys-326-Cys-352. Glu-318 (nucleophile) is an active-site residue.

This sequence belongs to the glycosyl hydrolase 5 (cellulase A) family.

The protein resides in the secreted. It catalyses the reaction Successive hydrolysis of beta-D-glucose units from the non-reducing ends of (1-&gt;3)-beta-D-glucans, releasing alpha-glucose.. Beta-glucanases participate in the metabolism of beta-glucan, the main structural component of the cell wall. It could also function biosynthetically as a transglycosylase. The sequence is that of Glucan 1,3-beta-glucosidase from Schwanniomyces occidentalis (Yeast).